A 117-amino-acid polypeptide reads, in one-letter code: Large ribosomal subunit protein uL22 (117 aa).

Belongs to the universal ribosomal protein uL22 family. Part of the 50S ribosomal subunit.

In terms of biological role, this protein binds specifically to 23S rRNA; its binding is stimulated by other ribosomal proteins, e.g. L4, L17, and L20. It is important during the early stages of 50S assembly. It makes multiple contacts with different domains of the 23S rRNA in the assembled 50S subunit and ribosome. Functionally, the globular domain of the protein is located near the polypeptide exit tunnel on the outside of the subunit, while an extended beta-hairpin is found that lines the wall of the exit tunnel in the center of the 70S ribosome. The sequence is that of Large ribosomal subunit protein uL22 from Chlorobium phaeobacteroides (strain BS1).